A 225-amino-acid chain; its full sequence is Small ribosomal subunit protein uS3 (225 aa).

A KH type-2 domain is found at 38-106; it reads IRRFLQKKFK…PIGMNIIEVK (69 aa).

This sequence belongs to the universal ribosomal protein uS3 family. Part of the 30S ribosomal subunit. Forms a tight complex with proteins S10 and S14.

Its function is as follows. Binds the lower part of the 30S subunit head. Binds mRNA in the 70S ribosome, positioning it for translation. This is Small ribosomal subunit protein uS3 from Leptospira biflexa serovar Patoc (strain Patoc 1 / Ames).